The sequence spans 204 residues: Guanylate kinase (204 aa).

Positions G5 to D184 constitute a Guanylate kinase-like domain. G12 to G19 is an ATP binding site.

This sequence belongs to the guanylate kinase family.

Its subcellular location is the cytoplasm. The enzyme catalyses GMP + ATP = GDP + ADP. Its function is as follows. Essential for recycling GMP and indirectly, cGMP. The protein is Guanylate kinase of Lactobacillus acidophilus (strain ATCC 700396 / NCK56 / N2 / NCFM).